The primary structure comprises 311 residues: Aspartate carbamoyltransferase catalytic subunit (311 aa).

Carbamoyl phosphate contacts are provided by Arg-55 and Thr-56. Lys-85 is an L-aspartate binding site. Arg-106, His-135, and Gln-138 together coordinate carbamoyl phosphate. L-aspartate contacts are provided by Arg-168 and Arg-230. Carbamoyl phosphate contacts are provided by Leu-268 and Pro-269.

This sequence belongs to the aspartate/ornithine carbamoyltransferase superfamily. ATCase family. In terms of assembly, heterododecamer (2C3:3R2) of six catalytic PyrB chains organized as two trimers (C3), and six regulatory PyrI chains organized as three dimers (R2).

It carries out the reaction carbamoyl phosphate + L-aspartate = N-carbamoyl-L-aspartate + phosphate + H(+). The protein operates within pyrimidine metabolism; UMP biosynthesis via de novo pathway; (S)-dihydroorotate from bicarbonate: step 2/3. Functionally, catalyzes the condensation of carbamoyl phosphate and aspartate to form carbamoyl aspartate and inorganic phosphate, the committed step in the de novo pyrimidine nucleotide biosynthesis pathway. The polypeptide is Aspartate carbamoyltransferase catalytic subunit (Cronobacter sakazakii (strain ATCC BAA-894) (Enterobacter sakazakii)).